The chain runs to 799 residues: Heat shock protein 90-6, mitochondrial (799 aa).

The N-terminal 48 residues, 1-48, are a transit peptide targeting the mitochondrion; the sequence is MIRLSKRSVSTLLRSGNQSFRIAAAASTSRSSPSATDVKRSDTESRWY. The segment covering 23–35 has biased composition (low complexity); the sequence is AAAASTSRSSPSA. A disordered region spans residues 23–61; it reads AAAASTSRSSPSATDVKRSDTESRWYSSLTNGQSKNSGS. Residues 46–61 are compositionally biased toward polar residues; it reads RWYSSLTNGQSKNSGS. ATP contacts are provided by residues glutamate 124, asparagine 128, aspartate 170, methionine 175, 190 to 191, 214 to 219, and threonine 269; these read SG and QFGVGF. The interval 314–337 is disordered; the sequence is EVEVEDDPTETKKDDQDDQTEKKK. A compositionally biased stretch (basic and acidic residues) spans 322-334; that stretch reads TETKKDDQDDQTE. Arginine 464 serves as a coordination point for ATP. Over residues 766–777 the composition is skewed to polar residues; the sequence is SPEVQPQQQQMA. Residues 766–799 form a disordered region; sequence SPEVQPQQQQMAHSHDAETFEAEVVEPVEVDGKK. Residues 784–799 show a composition bias toward acidic residues; the sequence is TFEAEVVEPVEVDGKK.

This sequence belongs to the heat shock protein 90 family. Interacts with P23-1.

The protein resides in the mitochondrion. In terms of biological role, molecular chaperone which stabilizes unfolding protein intermediates and functions as a folding molecular chaperone that assists the non-covalent folding of proteins in an ATP-dependent manner. The polypeptide is Heat shock protein 90-6, mitochondrial (Arabidopsis thaliana (Mouse-ear cress)).